A 246-amino-acid chain; its full sequence is MSQIESQNPEPVFQLKGSMLAITVMELARTNLEALDRQLAAKVAQAPNFFSNTPLILALDKLAPNEGPVDLPGLVRICRQHGLRTLAIRANRIEDIAAAIAVDLPVLPPSGARERVIDPVEAEAPKKIPEKPPEPLIKPTRVITAPVRGGQQIYAQGGDLVVVAPVSPGAELLADGNIHVYGPMRGRALAGIKGDTKARIFCQQLSAELISIAGQYKVSEDLRRDPLWGSPVQISLSGDVLNIIRL.

This sequence belongs to the MinC family. In terms of assembly, interacts with MinD and FtsZ.

Functionally, cell division inhibitor that blocks the formation of polar Z ring septums. Rapidly oscillates between the poles of the cell to destabilize FtsZ filaments that have formed before they mature into polar Z rings. Prevents FtsZ polymerization. This chain is Probable septum site-determining protein MinC, found in Pseudomonas syringae pv. syringae (strain B728a).